Reading from the N-terminus, the 406-residue chain is HEAT repeat-containing taxis protein OE_2401F (406 aa).

HEAT repeat units lie at residues 7–41, 42–78, 90–127, 153–184, 185–215, 216–252, and 370–406; these read LERSGDVEKLVELLQESEKETVRRRAAEILGNLDE, PEPEGIQALVDAMSDDDESVRAAAIDALTQQEAVDAL, GATWAQAEAFVENLESETPELRMAAANVLGLLGVEDTA, IEQPAVTGILVDCLHGEPLKVRREAAESLGRL, TTEQALDGLLSVVEDDSEAMRRTAVSSLGRF, ETAEPVDALVERLGDESDLVRRAAVFSLIEILSNVPP, and VGGDRSRQRLERLVDETDSEEVRRRAFSAISKLGGKT.

Interacts with chemotaxis (Che) proteins.

In terms of biological role, involved in taxis signal transduction. Essential for the ability to control the direction of flagellar rotation. May have a role between CheY and the flagellum. This chain is HEAT repeat-containing taxis protein OE_2401F, found in Halobacterium salinarum (strain ATCC 29341 / DSM 671 / R1).